A 513-amino-acid polypeptide reads, in one-letter code: MQLNSTEISDLIKQRIEQFEVVSEARNEGTIVAVSDGIIRVHGLADVMQGEMIELPGNRYAIALNLERDSVGAVVMGPYADLAEGQKVKTTGRILEVPVGRGLLGRVVNTLGQPIDGKGPIDNDGFSPVEVIAPGVIERKSVDQPVQTGYKAVDSMIPIGRGQRELVIGDRQTGKTALAIDAIINQKDSGIKCVYVAVGQKASTIANVVRKLEEHGALANTVVVVATASEAAALQYLAPYSGCSMGEYFRDRGEDALIVYDDLSKQAVAYRQISLLLKRPPGREAYPGDVFYLHSRLLERASRVNAEYVEKFTNGEVKGQTGSLTALPIIETQAGDVSAFVPTNVISITDGQIFLETDLFNSGLRPAVNPGISVSRVGGAAQTKIIKKLSGGIRTALAQYRELAAFSQFASDLDDATRAQLEHGERVTELMKQKQYAPMSVADQSVSIFAAEKGYLKGVELNKIGDFEASLLSYMNSEHADLMKTINETGDYNADIEGGLKAGLDKFVETQTW.

169 to 176 (GDRQTGKT) is an ATP binding site.

Belongs to the ATPase alpha/beta chains family. F-type ATPases have 2 components, CF(1) - the catalytic core - and CF(0) - the membrane proton channel. CF(1) has five subunits: alpha(3), beta(3), gamma(1), delta(1), epsilon(1). CF(0) has three main subunits: a(1), b(2) and c(9-12). The alpha and beta chains form an alternating ring which encloses part of the gamma chain. CF(1) is attached to CF(0) by a central stalk formed by the gamma and epsilon chains, while a peripheral stalk is formed by the delta and b chains.

It localises to the cell inner membrane. The catalysed reaction is ATP + H2O + 4 H(+)(in) = ADP + phosphate + 5 H(+)(out). Produces ATP from ADP in the presence of a proton gradient across the membrane. The alpha chain is a regulatory subunit. The chain is ATP synthase subunit alpha from Shewanella loihica (strain ATCC BAA-1088 / PV-4).